A 120-amino-acid polypeptide reads, in one-letter code: Large ribosomal subunit protein uL18 (120 aa).

The protein belongs to the universal ribosomal protein uL18 family. As to quaternary structure, part of the 50S ribosomal subunit; part of the 5S rRNA/L5/L18/L25 subcomplex. Contacts the 5S and 23S rRNAs.

Its function is as follows. This is one of the proteins that bind and probably mediate the attachment of the 5S RNA into the large ribosomal subunit, where it forms part of the central protuberance. The chain is Large ribosomal subunit protein uL18 from Oleidesulfovibrio alaskensis (strain ATCC BAA-1058 / DSM 17464 / G20) (Desulfovibrio alaskensis).